Here is a 124-residue protein sequence, read N- to C-terminus: Small ribosomal subunit protein uS12 (124 aa).

Asp89 is subject to 3-methylthioaspartic acid.

Belongs to the universal ribosomal protein uS12 family. In terms of assembly, part of the 30S ribosomal subunit. Contacts proteins S8 and S17. May interact with IF1 in the 30S initiation complex.

In terms of biological role, with S4 and S5 plays an important role in translational accuracy. Interacts with and stabilizes bases of the 16S rRNA that are involved in tRNA selection in the A site and with the mRNA backbone. Located at the interface of the 30S and 50S subunits, it traverses the body of the 30S subunit contacting proteins on the other side and probably holding the rRNA structure together. The combined cluster of proteins S8, S12 and S17 appears to hold together the shoulder and platform of the 30S subunit. The protein is Small ribosomal subunit protein uS12 of Proteus mirabilis (strain HI4320).